Here is a 280-residue protein sequence, read N- to C-terminus: Hydrolase MT0498 (280 aa).

The region spanning 1 to 251 is the CN hydrolase domain; that stretch reads MRIALAQIRS…PQLLVADIDV (251 aa). E40 functions as the Proton acceptor in the catalytic mechanism. Residue K110 is the Proton donor of the active site. C146 serves as the catalytic Nucleophile.

It belongs to the carbon-nitrogen hydrolase superfamily. NIT1/NIT2 family.

This Mycobacterium tuberculosis (strain CDC 1551 / Oshkosh) protein is Hydrolase MT0498.